Reading from the N-terminus, the 103-residue chain is N(4)-acetylcytidine amidohydrolase (103 aa).

The ASCH domain occupies 6 to 100 (ITFFQRFQED…AEDRFYVIEF (95 aa)). The active-site Proton acceptor is Lys21. Thr24 (nucleophile) is an active-site residue. Residue Glu74 is the Proton donor of the active site.

This sequence belongs to the N(4)-acetylcytidine amidohydrolase family.

The enzyme catalyses N(4)-acetylcytidine + H2O = cytidine + acetate + H(+). It catalyses the reaction N(4)-acetyl-2'-deoxycytidine + H2O = 2'-deoxycytidine + acetate + H(+). It carries out the reaction N(4)-acetylcytosine + H2O = cytosine + acetate + H(+). Catalyzes the hydrolysis of N(4)-acetylcytidine (ac4C). This chain is N(4)-acetylcytidine amidohydrolase, found in Klebsiella pneumoniae (strain 342).